The sequence spans 401 residues: Rho-N domain-containing protein 1, chloroplastic (401 aa).

The N-terminal 63 residues, 1 to 63, are a transit peptide targeting the chloroplast; sequence MAMSGTFHLT…VPNRSSFVCR (63 aa). Disordered regions lie at residues 73 to 129 and 180 to 361; these read PDFS…PGPR and KHSG…EEAV. Composition is skewed to polar residues over residues 102 to 126, 210 to 223, and 240 to 265; these read DMLS…TSSP, TGNL…DNNA, and PRSQ…VTWT. Over residues 266-290 the composition is skewed to basic and acidic residues; it reads QKKDTVELHDEPEHEPAYEHEHEPE. The segment covering 339-358 has biased composition (acidic residues); the sequence is LSDDDESLDDADEDSDEAEE. Residues 339 to 371 adopt a coiled-coil conformation; sequence LSDDDESLDDADEDSDEAEEEAVKDLSELKLVE.

In terms of assembly, homodimer or homomultimer. Part of a chloroplastic degradosome-like complex. Interacts with RNE.

It localises to the plastid. Its subcellular location is the chloroplast. Binds to and supports processing of specific plastid RNAs. Associates via its C-terminal Rho-N domain to single stranded regions of 16S and 23S rRNAs or to rbcL mRNAs. May be involved in targeting transcripts to RNases such as RNE or RNase J. In Arabidopsis thaliana (Mouse-ear cress), this protein is Rho-N domain-containing protein 1, chloroplastic (RHON1).